Consider the following 305-residue polypeptide: Acetyl-coenzyme A carboxylase carboxyl transferase subunit beta (305 aa).

The CoA carboxyltransferase N-terminal domain occupies 29–298 (LWTKCESCDA…EMKLPLLESS (270 aa)). The Zn(2+) site is built by Cys33, Cys36, Cys52, and Cys55. A C4-type zinc finger spans residues 33–55 (CESCDALTYTKDLQANLMVCLQC).

It belongs to the AccD/PCCB family. Acetyl-CoA carboxylase is a heterohexamer composed of biotin carboxyl carrier protein (AccB), biotin carboxylase (AccC) and two subunits each of ACCase subunit alpha (AccA) and ACCase subunit beta (AccD). Zn(2+) is required as a cofactor.

The protein localises to the cytoplasm. The catalysed reaction is N(6)-carboxybiotinyl-L-lysyl-[protein] + acetyl-CoA = N(6)-biotinyl-L-lysyl-[protein] + malonyl-CoA. It functions in the pathway lipid metabolism; malonyl-CoA biosynthesis; malonyl-CoA from acetyl-CoA: step 1/1. Its function is as follows. Component of the acetyl coenzyme A carboxylase (ACC) complex. Biotin carboxylase (BC) catalyzes the carboxylation of biotin on its carrier protein (BCCP) and then the CO(2) group is transferred by the transcarboxylase to acetyl-CoA to form malonyl-CoA. In Synechococcus sp. (strain ATCC 27144 / PCC 6301 / SAUG 1402/1) (Anacystis nidulans), this protein is Acetyl-coenzyme A carboxylase carboxyl transferase subunit beta.